A 474-amino-acid polypeptide reads, in one-letter code: Glutamyl-tRNA(Gln) amidotransferase subunit A (474 aa).

Active-site charge relay system residues include lysine 76 and serine 151. Serine 175 serves as the catalytic Acyl-ester intermediate.

It belongs to the amidase family. GatA subfamily. In terms of assembly, heterotrimer of A, B and C subunits.

The enzyme catalyses L-glutamyl-tRNA(Gln) + L-glutamine + ATP + H2O = L-glutaminyl-tRNA(Gln) + L-glutamate + ADP + phosphate + H(+). Functionally, allows the formation of correctly charged Gln-tRNA(Gln) through the transamidation of misacylated Glu-tRNA(Gln) in organisms which lack glutaminyl-tRNA synthetase. The reaction takes place in the presence of glutamine and ATP through an activated gamma-phospho-Glu-tRNA(Gln). The chain is Glutamyl-tRNA(Gln) amidotransferase subunit A from Chlorobium chlorochromatii (strain CaD3).